Here is a 383-residue protein sequence, read N- to C-terminus: S-adenosylmethionine synthase (383 aa).

His-15 contributes to the ATP binding site. Asp-17 is a binding site for Mg(2+). Glu-43 is a K(+) binding site. L-methionine is bound by residues Glu-56 and Gln-99. The segment at 99-109 is flexible loop; sequence QSPDINQGVDR. Residues 164–166, 230–231, Asp-239, 245–246, Ala-262, and Lys-266 contribute to the ATP site; these read DAK, RF, and RK. L-methionine is bound at residue Asp-239. L-methionine is bound at residue Lys-270.

This sequence belongs to the AdoMet synthase family. In terms of assembly, homotetramer; dimer of dimers. The cofactor is Mg(2+). Requires K(+) as cofactor.

It is found in the cytoplasm. The catalysed reaction is L-methionine + ATP + H2O = S-adenosyl-L-methionine + phosphate + diphosphate. It functions in the pathway amino-acid biosynthesis; S-adenosyl-L-methionine biosynthesis; S-adenosyl-L-methionine from L-methionine: step 1/1. Its function is as follows. Catalyzes the formation of S-adenosylmethionine (AdoMet) from methionine and ATP. The overall synthetic reaction is composed of two sequential steps, AdoMet formation and the subsequent tripolyphosphate hydrolysis which occurs prior to release of AdoMet from the enzyme. The protein is S-adenosylmethionine synthase of Shewanella amazonensis (strain ATCC BAA-1098 / SB2B).